The primary structure comprises 242 residues: Putative prolyl 4-hydroxylase (242 aa).

The region spanning 128 to 238 is the Fe2OG dioxygenase domain; sequence NAEDLQVVRY…KWIANLWFRE (111 aa).

The protein belongs to the P4HA family. Requires Fe cation as cofactor. L-ascorbate is required as a cofactor.

Its subcellular location is the virion. The catalysed reaction is L-prolyl-[collagen] + 2-oxoglutarate + O2 = trans-4-hydroxy-L-prolyl-[collagen] + succinate + CO2. Its function is as follows. May catalyze the post-translational formation of 4-hydroxyproline in -Xaa-Pro-Gly- sequences in the 6 collagen-like proteins of Mimivirus. In Acanthamoeba polyphaga mimivirus (APMV), this protein is Putative prolyl 4-hydroxylase.